Reading from the N-terminus, the 177-residue chain is Large ribosomal subunit protein uL5 (177 aa).

Belongs to the universal ribosomal protein uL5 family. In terms of assembly, part of the 50S ribosomal subunit; part of the 5S rRNA/L5/L18/L25 subcomplex. Contacts the 5S rRNA and the P site tRNA. Forms a bridge to the 30S subunit in the 70S ribosome.

This is one of the proteins that bind and probably mediate the attachment of the 5S RNA into the large ribosomal subunit, where it forms part of the central protuberance. In the 70S ribosome it contacts protein S13 of the 30S subunit (bridge B1b), connecting the 2 subunits; this bridge is implicated in subunit movement. Contacts the P site tRNA; the 5S rRNA and some of its associated proteins might help stabilize positioning of ribosome-bound tRNAs. This Ehrlichia chaffeensis (strain ATCC CRL-10679 / Arkansas) protein is Large ribosomal subunit protein uL5.